A 149-amino-acid chain; its full sequence is Calmodulin (149 aa).

EF-hand domains are found at residues 8–43 (QQIA…LGQN), 44–79 (PSES…KMKD), 81–116 (DSEA…IGEK), and 117–149 (LSDA…LAAK). Ca(2+) contacts are provided by Asp21, Asp23, Asp25, Lys27, Glu32, Asp57, Asn59, Asp61, Ser63, Glu68, Asp94, Asn96, Asp98, Lys100, Glu105, Asp130, Asn132, Asp134, Glu136, and Glu141.

It belongs to the calmodulin family.

In terms of biological role, calmodulin mediates the control of a large number of enzymes, ion channels and other proteins by Ca(2+). Among the enzymes to be stimulated by the calmodulin-Ca(2+) complex are a number of protein kinases and phosphatases. The chain is Calmodulin (CMD1) from Candida albicans (Yeast).